The chain runs to 85 residues: UPF0386 protein MXAN_1729 (85 aa).

Belongs to the UPF0386 family.

This is UPF0386 protein MXAN_1729 from Myxococcus xanthus (strain DK1622).